The primary structure comprises 139 residues: ATP synthase epsilon chain (139 aa).

It belongs to the ATPase epsilon chain family. F-type ATPases have 2 components, CF(1) - the catalytic core - and CF(0) - the membrane proton channel. CF(1) has five subunits: alpha(3), beta(3), gamma(1), delta(1), epsilon(1). CF(0) has three main subunits: a, b and c.

It is found in the cell membrane. In terms of biological role, produces ATP from ADP in the presence of a proton gradient across the membrane. The sequence is that of ATP synthase epsilon chain from Levilactobacillus brevis (strain ATCC 367 / BCRC 12310 / CIP 105137 / JCM 1170 / LMG 11437 / NCIMB 947 / NCTC 947) (Lactobacillus brevis).